Reading from the N-terminus, the 531-residue chain is Phosphomethylpyrimidine synthase (531 aa).

Substrate is bound by residues Asn-167, Met-196, Tyr-225, His-261, 281-283 (SRG), 322-325 (DALR), and Glu-361. His-365 is a Zn(2+) binding site. Tyr-388 serves as a coordination point for substrate. A Zn(2+)-binding site is contributed by His-429. Residues Cys-511, Cys-514, and Cys-519 each coordinate [4Fe-4S] cluster.

The protein belongs to the ThiC family. It depends on [4Fe-4S] cluster as a cofactor.

It catalyses the reaction 5-amino-1-(5-phospho-beta-D-ribosyl)imidazole + S-adenosyl-L-methionine = 4-amino-2-methyl-5-(phosphooxymethyl)pyrimidine + CO + 5'-deoxyadenosine + formate + L-methionine + 3 H(+). The protein operates within cofactor biosynthesis; thiamine diphosphate biosynthesis. Its function is as follows. Catalyzes the synthesis of the hydroxymethylpyrimidine phosphate (HMP-P) moiety of thiamine from aminoimidazole ribotide (AIR) in a radical S-adenosyl-L-methionine (SAM)-dependent reaction. The chain is Phosphomethylpyrimidine synthase from Chlorobium chlorochromatii (strain CaD3).